The following is a 428-amino-acid chain: Lysophosphatidic acid phosphatase type 6 (428 aa).

The transit peptide at 1-32 (MITGVFSMRLWTPVGVLTSLAYCLHQRRVALA) directs the protein to the mitochondrion. The tract at residues 58–168 (RHGARSPLKP…VFIRSTNIFR (111 aa)) is substrate binding. His59 functions as the Nucleophile in the catalytic mechanism. Residue Asp335 is the Proton donor of the active site.

This sequence belongs to the histidine acid phosphatase family. Monomer. As to expression, highly expressed in kidney, heart, small intestine, muscle, liver, prostate, testis, ovary and weakly expressed in thymus and colon.

The protein localises to the mitochondrion. It catalyses the reaction a phosphate monoester + H2O = an alcohol + phosphate. The enzyme catalyses 1-(9Z-octadecenoyl)-sn-glycero-3-phosphate + H2O = 1-(9Z-octadecenoyl)-sn-glycerol + phosphate. Its function is as follows. Hydrolyzes lysophosphatidic acid (LPA) containing a medium length fatty acid chain to the corresponding monoacylglycerol. Has highest activity with lysophosphatidic acid containing myristate (C14:0), monounsaturated oleate (C18:1) or palmitate (C16:0), and lower activity with C18:0 and C6:0 lysophosphatidic acid. The polypeptide is Lysophosphatidic acid phosphatase type 6 (ACP6) (Homo sapiens (Human)).